The primary structure comprises 694 residues: Follicle-stimulating hormone receptor (694 aa).

A signal peptide spans 1–17; the sequence is MALLLVSLLAFLGSGAG. 2 disulfide bridges follow: C18–C25 and C23–C32. Residues 18–46 enclose the LRRNT domain; that stretch reads CHHWLCHCSDRVFLCQDSKVTEIPPDLPR. Topologically, residues 18–365 are extracellular; that stretch reads CHHWLCHCSD…EDIMGYNILR (348 aa). LRR repeat units lie at residues 49 to 72, 73 to 97, 98 to 118, 119 to 143, 144 to 169, 170 to 192, 193 to 216, 217 to 240, and 241 to 259; these read IELR…FKDL, EKIE…LPKL, HEIR…AFQN, LPNL…KIQS, LQKV…MGLS, FDSL…AFNG, TQLD…VFRG, ASGP…GLEN, and LKKL…PSLD. 2 N-linked (GlcNAc...) asparagine glycosylation sites follow: N191 and N199. 4 disulfides stabilise this stretch: C275/C345, C276/C292, C276/C355, and C292/C337. N293 and N311 each carry an N-linked (GlcNAc...) asparagine glycan. The helical transmembrane segment at 366–386 threads the bilayer; sequence VLIWFISILAITGNITVLVIL. Over 387-397 the chain is Cytoplasmic; it reads TTSQYKLTVPR. The chain crosses the membrane as a helical span at residues 398-420; it reads FLMCNLAFADLCIGIYLLPIASV. Residues 421 to 442 are Extracellular-facing; sequence DIHTKSQYHNYAIDWQTAVGCD. The cysteines at positions 441 and 516 are disulfide-linked. The chain crosses the membrane as a helical span at residues 443 to 464; sequence AAGFFTAFASELSVYTLTAIPL. Residues 465 to 484 are Cytoplasmic-facing; it reads ERWHTITHAMQLERKVQLRH. A helical membrane pass occupies residues 485 to 507; that stretch reads AASVMVMGWVFAFAAALLPIFGV. Residues 508–527 lie on the Extracellular side of the membrane; the sequence is SSYMKVSICLPIDIDSPLSQ. The chain crosses the membrane as a helical span at residues 528 to 549; it reads LYVMALLVLNVLAFVVICGCYT. Topologically, residues 550–572 are cytoplasmic; the sequence is HIYLTVRNPNIVSSSSDTKIAKR. A helical membrane pass occupies residues 573–596; it reads MATLIFTDFLCMAPISLFAISASL. Residues 597 to 607 lie on the Extracellular side of the membrane; sequence KAPLITVSKAK. The helical transmembrane segment at 608-629 threads the bilayer; that stretch reads ILLVLFYPINSCANPFLYAIFT. The Cytoplasmic portion of the chain corresponds to 630 to 694; sequence KNFRRDFFIL…LVPLSQSAHN (65 aa).

This sequence belongs to the G-protein coupled receptor 1 family. FSH/LSH/TSH subfamily. Homotrimer. Functions as a homotrimer binding the FSH hormone heterodimer composed of CGA and FSHB. Interacts with ARRB2. Interacts with APPL2; interaction is independent of follicle stimulating hormone stimulation. In terms of processing, N-glycosylated; indirectly required for FSH-binding, possibly via a conformational change that allows high affinity binding of hormone.

It localises to the cell membrane. G protein-coupled receptor for follitropin, the follicle-stimulating hormone. Through cAMP production activates the downstream PI3K-AKT and ERK1/ERK2 signaling pathways. This Mesocricetus auratus (Golden hamster) protein is Follicle-stimulating hormone receptor (FSHR).